The sequence spans 428 residues: Probable mitochondrial adenine nucleotide transporter BTL3 (428 aa).

3 Solcar repeats span residues 129-212 (LNTT…YRGQ), 222-307 (TTNF…LKSA), and 336-421 (LGPM…MKVV). The next 6 membrane-spanning stretches (helical) occupy residues 132 to 152 (TKHL…IAPL), 187 to 207 (GNLV…YAYD), 228 to 248 (FVAG…LDTI), 283 to 303 (LVPS…VYDI), 342 to 362 (LLYG…FEVV), and 390 to 410 (VPAL…SAAI).

It belongs to the mitochondrial carrier (TC 2.A.29) family.

It localises to the mitochondrion inner membrane. In terms of biological role, probable mitochondrial adenylate carrier that catalyzes the transport of ATP, ADP and AMP. This chain is Probable mitochondrial adenine nucleotide transporter BTL3, found in Arabidopsis thaliana (Mouse-ear cress).